Reading from the N-terminus, the 513-residue chain is uncharacterized protein (513 aa).

Positions methionine 1–arginine 16 are enriched in basic and acidic residues. The tract at residues methionine 1–glutamate 21 is disordered.

This is an uncharacterized protein from Sinorhizobium fredii (strain NBRC 101917 / NGR234).